The sequence spans 204 residues: Protein OPG030 (204 aa).

A BACK domain is found at 95 to 177 (FLRQYINNNI…ITYSELTNAI (83 aa)).

It belongs to the orthopoxvirus OPG030 family.

This chain is Protein OPG030 (OPG30), found in Homo sapiens (Human).